A 113-amino-acid polypeptide reads, in one-letter code: Iron-sulfur cluster insertion protein ErpA (113 aa).

Iron-sulfur cluster-binding residues include cysteine 41, cysteine 105, and cysteine 107.

This sequence belongs to the HesB/IscA family. Homodimer. Iron-sulfur cluster serves as cofactor.

Required for insertion of 4Fe-4S clusters for at least IspG. In Histophilus somni (strain 2336) (Haemophilus somnus), this protein is Iron-sulfur cluster insertion protein ErpA.